Here is a 277-residue protein sequence, read N- to C-terminus: Membrane protein insertase YidC 2 (277 aa).

A signal peptide spans 1-22 (MKKYRKILAMLAVLAIVLVLSG). Cysteine 23 is lipidated: N-palmitoyl cysteine. Cysteine 23 carries the S-diacylglycerol cysteine lipid modification. Helical transmembrane passes span 35-55 (FWDG…SNLF), 60-80 (GLGI…LMIF), 130-150 (ASML…QAIW), 170-190 (PYYV…WLAM), and 208-228 (PVII…YWVI). Over residues 251-266 (EAKKQAERDRKRTLEK) the composition is skewed to basic and acidic residues. A disordered region spans residues 251–277 (EAKKQAERDRKRTLEKARKRAIRNHKR). Residues 267-277 (ARKRAIRNHKR) show a composition bias toward basic residues.

It belongs to the OXA1/ALB3/YidC family. Type 2 subfamily.

Its subcellular location is the cell membrane. In terms of biological role, required for the insertion and/or proper folding and/or complex formation of integral membrane proteins into the membrane. Involved in integration of membrane proteins that insert both dependently and independently of the Sec translocase complex, as well as at least some lipoproteins. This chain is Membrane protein insertase YidC 2, found in Lactiplantibacillus plantarum (strain ATCC BAA-793 / NCIMB 8826 / WCFS1) (Lactobacillus plantarum).